Here is a 316-residue protein sequence, read N- to C-terminus: Aspartate-semialdehyde dehydrogenase (316 aa).

NADP(+)-binding positions include 13–16 (TGAV) and 41–42 (RS). Arg-101 serves as a coordination point for phosphate. Cys-132 serves as the catalytic Acyl-thioester intermediate. Residue Gln-159 coordinates substrate. 162-163 (SG) contacts NADP(+). Lys-216 contributes to the phosphate binding site. Arg-238 lines the substrate pocket. His-245 functions as the Proton acceptor in the catalytic mechanism. Asn-316 contacts NADP(+).

This sequence belongs to the aspartate-semialdehyde dehydrogenase family. In terms of assembly, homodimer.

It carries out the reaction L-aspartate 4-semialdehyde + phosphate + NADP(+) = 4-phospho-L-aspartate + NADPH + H(+). It functions in the pathway amino-acid biosynthesis; L-lysine biosynthesis via DAP pathway; (S)-tetrahydrodipicolinate from L-aspartate: step 2/4. The protein operates within amino-acid biosynthesis; L-methionine biosynthesis via de novo pathway; L-homoserine from L-aspartate: step 2/3. Its pathway is amino-acid biosynthesis; L-threonine biosynthesis; L-threonine from L-aspartate: step 2/5. Its function is as follows. Catalyzes the NADPH-dependent formation of L-aspartate-semialdehyde (L-ASA) by the reductive dephosphorylation of L-aspartyl-4-phosphate. The sequence is that of Aspartate-semialdehyde dehydrogenase (asd) from Vibrio mimicus.